A 423-amino-acid chain; its full sequence is Citrate synthase-like protein clz17 (423 aa).

Catalysis depends on residues His-357 and Asp-413.

The protein belongs to the citrate synthase family.

It participates in secondary metabolite biosynthesis. Citrate synthase-like protein; part of the gene cluster that mediates the biosynthesis of squalestatin S1 (SQS1, also known as zaragozic acid A), a heavily oxidized fungal polyketide that offers potent cholesterol lowering activity by targeting squalene synthase (SS). SQS1 is composed of a 2,8-dioxobicyclic[3.2.1]octane-3,4,5-tricarboxyclic acid core that is connected to two lipophilic polyketide arms. These initial steps feature the priming of an unusual benzoic acid starter unit onto the highly reducing polyketide synthase clz14, followed by oxaloacetate extension and product release to generate a tricarboxylic acid containing product. The phenylalanine ammonia lyase (PAL) clz10 and the acyl-CoA ligase clz12 are involved in transforming phenylalanine into benzoyl-CoA. The citrate synthase-like protein clz17 is involved in connecting the C-alpha-carbons of the hexaketide chain and oxaloacetate to afford the tricarboxylic acid unit. The potential hydrolytic enzymes, clz11 and clz13, are in close proximity to pks2 and may participate in product release. On the other side, the tetraketide arm is synthesized by a the squalestatin tetraketide synthase clz2 and enzymatically esterified to the core in the last biosynthetic step, by the acetyltransferase clz6. The biosynthesis of the tetraketide must involve 3 rounds of chain extension. After the first and second rounds methyl-transfer occurs, and in all rounds of extension the ketoreductase and dehydratase are active. The enoyl reductase and C-MeT of clz2 are not active in the final round of extension. The acetyltransferase clz6 appears to have a broad substrate selectivity for its acyl CoA substrate, allowing the in vitro synthesis of novel squalestatins. The biosynthesis of SQS1 requires several oxidative steps likely performed by oxidoreductases clz3, clz15 and clz16. Finally, in support of the identification of the cluster as being responsible for SQS1 production, the cluster contains a gene encoding a putative squalene synthase (SS) clz20, suggesting a likely mechanism for self-resistance. The sequence is that of Citrate synthase-like protein clz17 from Cochliobolus lunatus (Filamentous fungus).